The sequence spans 179 residues: Shikimate kinase (179 aa).

15–20 (GAGKTS) contributes to the ATP binding site. Thr-19 lines the Mg(2+) pocket. Substrate-binding residues include Asp-37, Arg-61, and Gly-83. Arg-122 is a binding site for ATP. Arg-142 is a binding site for substrate.

This sequence belongs to the shikimate kinase family. Monomer. Mg(2+) serves as cofactor.

The protein resides in the cytoplasm. It catalyses the reaction shikimate + ATP = 3-phosphoshikimate + ADP + H(+). It participates in metabolic intermediate biosynthesis; chorismate biosynthesis; chorismate from D-erythrose 4-phosphate and phosphoenolpyruvate: step 5/7. In terms of biological role, catalyzes the specific phosphorylation of the 3-hydroxyl group of shikimic acid using ATP as a cosubstrate. The sequence is that of Shikimate kinase from Coxiella burnetii (strain Dugway 5J108-111).